An 839-amino-acid polypeptide reads, in one-letter code: Protein translocase subunit SecA (839 aa).

ATP is bound by residues Gln-85, 103–107 (GEGKT), and Asp-492. Residues 794–820 (EINYSGPDAGDTKKEPVRRKEKKIGRN) are disordered. Zn(2+)-binding residues include Cys-823, Cys-825, Cys-834, and Cys-835.

It belongs to the SecA family. Monomer and homodimer. Part of the essential Sec protein translocation apparatus which comprises SecA, SecYEG and auxiliary proteins SecDF. Other proteins may also be involved. Zn(2+) is required as a cofactor.

It is found in the cell membrane. It localises to the cytoplasm. The catalysed reaction is ATP + H2O + cellular proteinSide 1 = ADP + phosphate + cellular proteinSide 2.. In terms of biological role, part of the Sec protein translocase complex. Interacts with the SecYEG preprotein conducting channel. Has a central role in coupling the hydrolysis of ATP to the transfer of proteins into and across the cell membrane, serving as an ATP-driven molecular motor driving the stepwise translocation of polypeptide chains across the membrane. This is Protein translocase subunit SecA from Clostridium acetobutylicum (strain ATCC 824 / DSM 792 / JCM 1419 / IAM 19013 / LMG 5710 / NBRC 13948 / NRRL B-527 / VKM B-1787 / 2291 / W).